We begin with the raw amino-acid sequence, 237 residues long: MTYSRVLLKLSGEALMGTQGYGIDPAIVNSIASDVAKVVAGGTELAIVVGGGNIFRGLKGSAAGMERATADYVGMLATVMNAITLQDGLERAGVPTRVQTAIAMQEVAEPYIRRKAMRHLEKGRVVVFGAGCGNPFFTTDTTAALRAAEINADVVFKATKVDGVYDKDPAKHADAVKHAHLTYQDVLSGELAVMDSTAIALCKDNNIPIVVFNLFEPGNIGRAVAGEPIGSRIGNPA.

An ATP-binding site is contributed by 9–12 (KLSG). Residues 17 to 22 (GTQGYG) are involved in allosteric activation by GTP. UMP is bound at residue Gly-51. 2 residues coordinate ATP: Gly-52 and Arg-56. UMP is bound by residues Asp-71 and 132–139 (CGNPFFTT). Thr-159, Tyr-165, and Asp-168 together coordinate ATP.

The protein belongs to the UMP kinase family. Homohexamer.

The protein localises to the cytoplasm. It catalyses the reaction UMP + ATP = UDP + ADP. It participates in pyrimidine metabolism; CTP biosynthesis via de novo pathway; UDP from UMP (UMPK route): step 1/1. Allosterically activated by GTP. Inhibited by UTP. Catalyzes the reversible phosphorylation of UMP to UDP. The sequence is that of Uridylate kinase from Parasynechococcus marenigrum (strain WH8102).